Reading from the N-terminus, the 270-residue chain is Cytosolic Fe-S cluster assembly factor NUBP2 homolog (270 aa).

21-28 (GKGGVGKS) contacts ATP. [4Fe-4S] cluster is bound by residues Cys195 and Cys198.

This sequence belongs to the Mrp/NBP35 ATP-binding proteins family. NUBP2/CFD1 subfamily. Heterotetramer of 2 NUBP1 and 2 NUBP2 chains. [4Fe-4S] cluster is required as a cofactor.

It localises to the cytoplasm. Functionally, component of the cytosolic iron-sulfur (Fe/S) protein assembly (CIA) machinery. Required for maturation of extramitochondrial Fe-S proteins. The NUBP1-NUBP2 heterotetramer forms a Fe-S scaffold complex, mediating the de novo assembly of an Fe-S cluster and its transfer to target apoproteins. The polypeptide is Cytosolic Fe-S cluster assembly factor NUBP2 homolog (Nematostella vectensis (Starlet sea anemone)).